The primary structure comprises 372 residues: Aminomethyltransferase (372 aa).

The protein belongs to the GcvT family. In terms of assembly, the glycine cleavage system is composed of four proteins: P, T, L and H.

It carries out the reaction N(6)-[(R)-S(8)-aminomethyldihydrolipoyl]-L-lysyl-[protein] + (6S)-5,6,7,8-tetrahydrofolate = N(6)-[(R)-dihydrolipoyl]-L-lysyl-[protein] + (6R)-5,10-methylene-5,6,7,8-tetrahydrofolate + NH4(+). Functionally, the glycine cleavage system catalyzes the degradation of glycine. This Synechocystis sp. (strain ATCC 27184 / PCC 6803 / Kazusa) protein is Aminomethyltransferase.